Reading from the N-terminus, the 52-residue chain is DNA import protein CedA2 (52 aa).

2 helical membrane passes run 1-21 (MKSYLLVSMLLLLNSILVYIY) and 27-47 (ILVSGITVAVIIYIVVKIIFE).

In terms of assembly, forms a complex composed of CedA, CedA1 and CedA2.

Its subcellular location is the cell membrane. Functionally, part of the Ced system, which is involved in DNA import. This Sulfolobus acidocaldarius (strain ATCC 33909 / DSM 639 / JCM 8929 / NBRC 15157 / NCIMB 11770) protein is DNA import protein CedA2.